Consider the following 654-residue polypeptide: Chaperone protein HtpG (654 aa).

An a; substrate-binding region spans residues 1 to 344; the sequence is MTVENAPQRE…SDDLPLNVSR (344 aa). The interval 345–556 is b; the sequence is ELLQDSQVVR…EGGSPAYLER (212 aa). The c stretch occupies residues 557–654; that stretch reads LLQQRGRGAG…AQTPASATAS (98 aa).

The protein belongs to the heat shock protein 90 family. Homodimer.

It localises to the cytoplasm. Molecular chaperone. Has ATPase activity. The sequence is that of Chaperone protein HtpG from Myxococcus xanthus (strain DK1622).